The primary structure comprises 178 residues: Large ribosomal subunit protein uL6 (178 aa).

It belongs to the universal ribosomal protein uL6 family. As to quaternary structure, part of the 50S ribosomal subunit.

In terms of biological role, this protein binds to the 23S rRNA, and is important in its secondary structure. It is located near the subunit interface in the base of the L7/L12 stalk, and near the tRNA binding site of the peptidyltransferase center. The polypeptide is Large ribosomal subunit protein uL6 (Campylobacter hominis (strain ATCC BAA-381 / DSM 21671 / CCUG 45161 / LMG 19568 / NCTC 13146 / CH001A)).